Consider the following 161-residue polypeptide: MYGNGPVFKAEGTSFRDQPYAEQLPQGLWTTGLCDCHEDAHICVQTAIMPCVSFAQNVEIVNRGTIPCMNAGLIHLALGFIGCSWLYAFPNRSRLREHFALPEEPCRDFLVHLFCTPCAICQESRELKNRGADPSIGWLSNVEKWSREKVTPPIVVPGMIR.

A helical transmembrane segment spans residues 71 to 89 (AGLIHLALGFIGCSWLYAF).

Belongs to the cornifelin family.

The protein localises to the membrane. Functionally, may be involved in heavy metals transport. In Arabidopsis thaliana (Mouse-ear cress), this protein is Protein PLANT CADMIUM RESISTANCE 12 (PCR12).